Consider the following 873-residue polypeptide: Protein translocase subunit SecA (873 aa).

ATP-binding positions include Q88, 106 to 110 (GEGKT), and D501. The Zn(2+) site is built by C856, C858, C867, and H868.

It belongs to the SecA family. Monomer and homodimer. Part of the essential Sec protein translocation apparatus which comprises SecA, SecYEG and auxiliary proteins SecDF-YajC and YidC. Requires Zn(2+) as cofactor.

The protein localises to the cell inner membrane. The protein resides in the cytoplasm. The enzyme catalyses ATP + H2O + cellular proteinSide 1 = ADP + phosphate + cellular proteinSide 2.. Functionally, part of the Sec protein translocase complex. Interacts with the SecYEG preprotein conducting channel. Has a central role in coupling the hydrolysis of ATP to the transfer of proteins into and across the cell membrane, serving both as a receptor for the preprotein-SecB complex and as an ATP-driven molecular motor driving the stepwise translocation of polypeptide chains across the membrane. In Anaplasma phagocytophilum (strain HZ), this protein is Protein translocase subunit SecA.